The sequence spans 397 residues: Elongation factor Tu (397 aa).

A tr-type G domain is found at 10-206 (KPHVNIGTIG…AIDSYIPTPE (197 aa)). The G1 stretch occupies residues 19-26 (GHVDHGKT). 19–26 (GHVDHGKT) is a binding site for GTP. Thr-26 is a binding site for Mg(2+). A G2 region spans residues 60–64 (GITIN). The segment at 81-84 (DCPG) is G3. GTP contacts are provided by residues 81–85 (DCPGH) and 136–139 (NKAD). The tract at residues 136-139 (NKAD) is G4. The tract at residues 174-176 (SAL) is G5.

Belongs to the TRAFAC class translation factor GTPase superfamily. Classic translation factor GTPase family. EF-Tu/EF-1A subfamily. In terms of assembly, monomer.

It is found in the cytoplasm. It carries out the reaction GTP + H2O = GDP + phosphate + H(+). Functionally, GTP hydrolase that promotes the GTP-dependent binding of aminoacyl-tRNA to the A-site of ribosomes during protein biosynthesis. The polypeptide is Elongation factor Tu (Clostridium botulinum (strain ATCC 19397 / Type A)).